The sequence spans 96 residues: Large ribosomal subunit protein uL23 (96 aa).

Belongs to the universal ribosomal protein uL23 family. As to quaternary structure, part of the 50S ribosomal subunit. Contacts protein L29, and trigger factor when it is bound to the ribosome.

Functionally, one of the early assembly proteins it binds 23S rRNA. One of the proteins that surrounds the polypeptide exit tunnel on the outside of the ribosome. Forms the main docking site for trigger factor binding to the ribosome. The sequence is that of Large ribosomal subunit protein uL23 from Maridesulfovibrio salexigens (strain ATCC 14822 / DSM 2638 / NCIMB 8403 / VKM B-1763) (Desulfovibrio salexigens).